The primary structure comprises 152 residues: Clitocypin-5 (152 aa).

In terms of assembly, homodimer.

Its function is as follows. Binds and inhibits cysteine proteinases. Inhibits most strongly papain and cathepsin L, more weakly bromelain and cathepsin B while it is completely ineffective against cathepsin H. The sequence is that of Clitocypin-5 (clt5) from Clitocybe nebularis (Clouded agaric).